The chain runs to 950 residues: Translation initiation factor IF-2 (950 aa).

Disordered regions lie at residues 57-254 (LAER…AVVI) and 304-328 (DVSR…KSLS). Low complexity-rich tracts occupy residues 101-131 (AEPQ…EPAA) and 139-169 (AAPL…QPAA). A compositionally biased stretch (pro residues) spans 170 to 215 (PAAPPAPTAQPSAPPPAAAQPRPPQPSAPSRPPPPGYRPAPPPGAR). The segment covering 216–233 (PPVSAAPGAPGQPGAAGQ) has biased composition (low complexity). Residues 449 to 618 (IRPPVVTVMG…ALQSEVLELK (170 aa)) form the tr-type G domain. Residues 458–465 (GHVDHGKT) form a G1 region. 458–465 (GHVDHGKT) lines the GTP pocket. Residues 483–487 (GITQH) are G2. Positions 504–507 (DTPG) are G3. Residues 504 to 508 (DTPGH) and 558 to 561 (NKVD) each bind GTP. The segment at 558–561 (NKVD) is G4. A G5 region spans residues 594–596 (SAR).

It belongs to the TRAFAC class translation factor GTPase superfamily. Classic translation factor GTPase family. IF-2 subfamily.

The protein localises to the cytoplasm. Its function is as follows. One of the essential components for the initiation of protein synthesis. Protects formylmethionyl-tRNA from spontaneous hydrolysis and promotes its binding to the 30S ribosomal subunits. Also involved in the hydrolysis of GTP during the formation of the 70S ribosomal complex. This chain is Translation initiation factor IF-2, found in Anaeromyxobacter dehalogenans (strain 2CP-C).